Here is a 293-residue protein sequence, read N- to C-terminus: Pyridoxal 5'-phosphate synthase subunit PdxS (293 aa).

Position 23 (aspartate 23) interacts with D-ribose 5-phosphate. The active-site Schiff-base intermediate with D-ribose 5-phosphate is the lysine 80. Residue glycine 152 coordinates D-ribose 5-phosphate. Arginine 164 serves as a coordination point for D-glyceraldehyde 3-phosphate. D-ribose 5-phosphate contacts are provided by residues glycine 213 and 234-235 (GS).

The protein belongs to the PdxS/SNZ family. In terms of assembly, in the presence of PdxT, forms a dodecamer of heterodimers.

It catalyses the reaction aldehydo-D-ribose 5-phosphate + D-glyceraldehyde 3-phosphate + L-glutamine = pyridoxal 5'-phosphate + L-glutamate + phosphate + 3 H2O + H(+). Its pathway is cofactor biosynthesis; pyridoxal 5'-phosphate biosynthesis. Functionally, catalyzes the formation of pyridoxal 5'-phosphate from ribose 5-phosphate (RBP), glyceraldehyde 3-phosphate (G3P) and ammonia. The ammonia is provided by the PdxT subunit. Can also use ribulose 5-phosphate and dihydroxyacetone phosphate as substrates, resulting from enzyme-catalyzed isomerization of RBP and G3P, respectively. This Syntrophus aciditrophicus (strain SB) protein is Pyridoxal 5'-phosphate synthase subunit PdxS.